We begin with the raw amino-acid sequence, 129 residues long: Small ribosomal subunit protein uS11 (129 aa).

This sequence belongs to the universal ribosomal protein uS11 family. As to quaternary structure, part of the 30S ribosomal subunit. Interacts with proteins S7 and S18. Binds to IF-3.

Its function is as follows. Located on the platform of the 30S subunit, it bridges several disparate RNA helices of the 16S rRNA. Forms part of the Shine-Dalgarno cleft in the 70S ribosome. The protein is Small ribosomal subunit protein uS11 of Rhodopseudomonas palustris (strain HaA2).